Here is a 568-residue protein sequence, read N- to C-terminus: Urease subunit alpha (568 aa).

One can recognise a Urease domain in the interval 131 to 568 (GGMDAHIHFI…LPLAQRYFLY (438 aa)). 3 residues coordinate Ni(2+): histidine 136, histidine 138, and lysine 219. An N6-carboxylysine modification is found at lysine 219. Histidine 221 is a binding site for substrate. Ni(2+) is bound by residues histidine 248 and histidine 274. Histidine 322 serves as the catalytic Proton donor. Residue aspartate 362 coordinates Ni(2+).

This sequence belongs to the metallo-dependent hydrolases superfamily. Urease alpha subunit family. Heterotrimer of UreA (gamma), UreB (beta) and UreC (alpha) subunits. Three heterotrimers associate to form the active enzyme. It depends on Ni cation as a cofactor. In terms of processing, carboxylation allows a single lysine to coordinate two nickel ions.

The protein localises to the cytoplasm. The enzyme catalyses urea + 2 H2O + H(+) = hydrogencarbonate + 2 NH4(+). The protein operates within nitrogen metabolism; urea degradation; CO(2) and NH(3) from urea (urease route): step 1/1. In Cereibacter sphaeroides (strain ATCC 17023 / DSM 158 / JCM 6121 / CCUG 31486 / LMG 2827 / NBRC 12203 / NCIMB 8253 / ATH 2.4.1.) (Rhodobacter sphaeroides), this protein is Urease subunit alpha.